We begin with the raw amino-acid sequence, 477 residues long: UDP-N-acetylmuramoylalanine--D-glutamate ligase (477 aa).

127–133 contacts ATP; the sequence is GTNGKTT.

The protein belongs to the MurCDEF family.

The protein localises to the cytoplasm. It carries out the reaction UDP-N-acetyl-alpha-D-muramoyl-L-alanine + D-glutamate + ATP = UDP-N-acetyl-alpha-D-muramoyl-L-alanyl-D-glutamate + ADP + phosphate + H(+). It functions in the pathway cell wall biogenesis; peptidoglycan biosynthesis. Cell wall formation. Catalyzes the addition of glutamate to the nucleotide precursor UDP-N-acetylmuramoyl-L-alanine (UMA). This is UDP-N-acetylmuramoylalanine--D-glutamate ligase from Prochlorococcus marinus (strain MIT 9515).